Consider the following 205-residue polypeptide: MLEVSNLTAIRDERVLFENLQFEIKPGELVQIEGRNGTGKTTLLRIITGLGDREEGMIKWKGEEVEKSRDVFHQDLLFLGHQTGVKRELTAFENLRFYQSIQNNSTSDEEIFTALTQVGLAGREDVPVAQLSAGQQRRVALARLWLSKQILWILDEPLTAIDKQGVKVLEALFAQHADNGGIVMLTTHQDMFADSPKLRKIKLGD.

The region spanning 2–204 (LEVSNLTAIR…SPKLRKIKLG (203 aa)) is the ABC transporter domain. 34–41 (GRNGTGKT) provides a ligand contact to ATP.

It belongs to the ABC transporter superfamily. CcmA exporter (TC 3.A.1.107) family. The complex is composed of two ATP-binding proteins (CcmA) and two transmembrane proteins (CcmB).

It is found in the cell inner membrane. It catalyses the reaction heme b(in) + ATP + H2O = heme b(out) + ADP + phosphate + H(+). Functionally, part of the ABC transporter complex CcmAB involved in the biogenesis of c-type cytochromes; once thought to export heme, this seems not to be the case, but its exact role is uncertain. Responsible for energy coupling to the transport system. This Vibrio parahaemolyticus serotype O3:K6 (strain RIMD 2210633) protein is Cytochrome c biogenesis ATP-binding export protein CcmA.